Consider the following 229-residue polypeptide: Large ribosomal subunit protein uL1 (229 aa).

Belongs to the universal ribosomal protein uL1 family. Part of the 50S ribosomal subunit.

In terms of biological role, binds directly to 23S rRNA. The L1 stalk is quite mobile in the ribosome, and is involved in E site tRNA release. Its function is as follows. Protein L1 is also a translational repressor protein, it controls the translation of the L11 operon by binding to its mRNA. The polypeptide is Large ribosomal subunit protein uL1 (Haemophilus influenzae (strain 86-028NP)).